Consider the following 261-residue polypeptide: Probable trans-aconitate 2-methyltransferase (261 aa).

The protein belongs to the methyltransferase superfamily. Tam family.

The protein localises to the cytoplasm. It carries out the reaction trans-aconitate + S-adenosyl-L-methionine = (E)-3-(methoxycarbonyl)pent-2-enedioate + S-adenosyl-L-homocysteine. Catalyzes the S-adenosylmethionine monomethyl esterification of trans-aconitate. In Mycobacterium bovis (strain ATCC BAA-935 / AF2122/97), this protein is Probable trans-aconitate 2-methyltransferase.